The primary structure comprises 238 residues: Aspirochlorine biosynthesis protein N (238 aa).

The protein belongs to the asaB hydroxylase/desaturase family.

Its pathway is mycotoxin biosynthesis. In terms of biological role, part of the gene cluster that mediates the biosynthesis of aspirochlorine (or antibiotic A30641), an unusual halogenated spiro compound with distinctive antifungal properties due to selective inhibition of protein biosynthesis, and which is also active against bacteria, viruses, and murine tumor cells. The non-ribosomal peptide synthetase (NRPS) aclP is responsible the formation of the diketopiperazine (DKP) core from the condensation of 2 phenylalanine residues. One Phe residue is tailored into chlorotyrosine by hydroxylation and chlorination, whereas the second Phe undergoes an unprecedented C-C bond cleavage to be converted into glycine. After formation of the DKP, sulfur is incorporated into the DKP by conjugation with glutathione by aclG, followed by its stepwise degradation to the thiol by aclI, aclJ and aclK, and the dithiol oxidation by aclT. In addition, oxygenases (aclB, aclC, aclL and aclO) and O-methyltransferases (aclM and aclU) act as tailoring enzymes to produce the intermediate dechloroaspirochlorine. Ultimately, chlorination of dechloroaspirochlorine by the halogenase aclH is the last step in the aspirochlorine pathway. The polypeptide is Aspirochlorine biosynthesis protein N (Aspergillus oryzae (strain ATCC 42149 / RIB 40) (Yellow koji mold)).